Reading from the N-terminus, the 238-residue chain is Chromosome partition protein MukE (238 aa).

The interval 206–238 is disordered; it reads EESSQSSFDLDENEKLSDISAEEQHELELEGDA. Positions 218 to 238 are enriched in basic and acidic residues; it reads NEKLSDISAEEQHELELEGDA.

This sequence belongs to the MukE family. In terms of assembly, interacts, and probably forms a ternary complex, with MukF and MukB. The complex formation is stimulated by calcium or magnesium.

The protein localises to the cytoplasm. It is found in the nucleoid. In terms of biological role, involved in chromosome condensation, segregation and cell cycle progression. May participate in facilitating chromosome segregation by condensation DNA from both sides of a centrally located replisome during cell division. Probably acts via its interaction with MukB and MukF. The chain is Chromosome partition protein MukE from Aliivibrio salmonicida (strain LFI1238) (Vibrio salmonicida (strain LFI1238)).